A 397-amino-acid chain; its full sequence is ATP-dependent RNA helicase eIF4A (397 aa).

The Q motif signature appears at 23–51 (YKFDDLNLKPNIVRGIFGYGYETPSAIQQ). The region spanning 54–224 (ILPITEGRDV…TKFMNNPVRI (171 aa)) is the Helicase ATP-binding domain. ATP is bound at residue 67–74 (AQSGTGKT). The short motif at 172–175 (DEAD) is the DEAD box element. The Helicase C-terminal domain occupies 235 to 396 (GIKQFYINVE…EMPADIGALF (162 aa)).

Belongs to the DEAD box helicase family. eIF4A subfamily. Component of the eIF4F complex, which composition varies with external and internal environmental conditions. It is composed of at least eIF4A, eIF4E and eIF4G.

It localises to the cytoplasm. It carries out the reaction ATP + H2O = ADP + phosphate + H(+). ATP-dependent RNA helicase which is a subunit of the eIF4F complex involved in cap recognition and is required for mRNA binding to ribosome. In the current model of translation initiation, eIF4A unwinds RNA secondary structures in the 5'-UTR of mRNAs which is necessary to allow efficient binding of the small ribosomal subunit, and subsequent scanning for the initiator codon. This chain is ATP-dependent RNA helicase eIF4A (TIF1), found in Candida albicans (strain SC5314 / ATCC MYA-2876) (Yeast).